We begin with the raw amino-acid sequence, 199 residues long: Neurotrophic factor BDNF precursor form (199 aa).

Residues 1–23 (GQGSLAYPGLRTQGNLETLSGPN) are disordered. Residues 1 to 100 (GQGSLAYPGL…AANMSMRVRR (100 aa)) constitute a propeptide that is removed on maturation. Positions 12–23 (TQGNLETLSGPN) are enriched in polar residues. Asn93 carries an N-linked (GlcNAc...) asparagine glycan. A disulfide bridge connects residues Cys113 and Cys180.

It belongs to the NGF-beta family.

Its subcellular location is the secreted. Promotes the survival of neuronal populations that are all located either in the central nervous system or directly connected to it. This chain is Neurotrophic factor BDNF precursor form (BDNF), found in Morelia spilota (Carpet python).